Here is a 454-residue protein sequence, read N- to C-terminus: Bifunctional protein GlmU (454 aa).

Positions 1 to 226 (MALNVVILAA…AVEVEGANNR (226 aa)) are pyrophosphorylase. Residues 8-11 (LAAG), K22, Q73, 78-79 (GT), 100-102 (YGD), G137, E151, N166, and N224 contribute to the UDP-N-acetyl-alpha-D-glucosamine site. A Mg(2+)-binding site is contributed by D102. N224 provides a ligand contact to Mg(2+). The interval 227 to 247 (VQLAQLERAYQARAAEKLMLE) is linker. The N-acetyltransferase stretch occupies residues 248-454 (GANLRDPARI…GWPRPVKLKK (207 aa)). Residues R330 and K348 each contribute to the UDP-N-acetyl-alpha-D-glucosamine site. The Proton acceptor role is filled by H360. Residues Y363 and N374 each contribute to the UDP-N-acetyl-alpha-D-glucosamine site. Residues A377, 383 to 384 (NY), S402, A420, and R437 contribute to the acetyl-CoA site.

It in the N-terminal section; belongs to the N-acetylglucosamine-1-phosphate uridyltransferase family. The protein in the C-terminal section; belongs to the transferase hexapeptide repeat family. As to quaternary structure, homotrimer. Mg(2+) serves as cofactor.

Its subcellular location is the cytoplasm. It carries out the reaction alpha-D-glucosamine 1-phosphate + acetyl-CoA = N-acetyl-alpha-D-glucosamine 1-phosphate + CoA + H(+). The enzyme catalyses N-acetyl-alpha-D-glucosamine 1-phosphate + UTP + H(+) = UDP-N-acetyl-alpha-D-glucosamine + diphosphate. The protein operates within nucleotide-sugar biosynthesis; UDP-N-acetyl-alpha-D-glucosamine biosynthesis; N-acetyl-alpha-D-glucosamine 1-phosphate from alpha-D-glucosamine 6-phosphate (route II): step 2/2. Its pathway is nucleotide-sugar biosynthesis; UDP-N-acetyl-alpha-D-glucosamine biosynthesis; UDP-N-acetyl-alpha-D-glucosamine from N-acetyl-alpha-D-glucosamine 1-phosphate: step 1/1. It functions in the pathway bacterial outer membrane biogenesis; LPS lipid A biosynthesis. Functionally, catalyzes the last two sequential reactions in the de novo biosynthetic pathway for UDP-N-acetylglucosamine (UDP-GlcNAc). The C-terminal domain catalyzes the transfer of acetyl group from acetyl coenzyme A to glucosamine-1-phosphate (GlcN-1-P) to produce N-acetylglucosamine-1-phosphate (GlcNAc-1-P), which is converted into UDP-GlcNAc by the transfer of uridine 5-monophosphate (from uridine 5-triphosphate), a reaction catalyzed by the N-terminal domain. The protein is Bifunctional protein GlmU of Shewanella pealeana (strain ATCC 700345 / ANG-SQ1).